The sequence spans 194 residues: Peptide deformylase (194 aa).

A disordered region spans residues 71-93 (DAEPEECGHDHGDGEGAHKHYPV). A compositionally biased stretch (basic and acidic residues) spans 76-93 (ECGHDHGDGEGAHKHYPV). Residues Cys-119 and His-161 each coordinate Fe cation. The active site involves Glu-162. His-165 is a binding site for Fe cation.

This sequence belongs to the polypeptide deformylase family. Fe(2+) serves as cofactor.

It catalyses the reaction N-terminal N-formyl-L-methionyl-[peptide] + H2O = N-terminal L-methionyl-[peptide] + formate. In terms of biological role, removes the formyl group from the N-terminal Met of newly synthesized proteins. Requires at least a dipeptide for an efficient rate of reaction. N-terminal L-methionine is a prerequisite for activity but the enzyme has broad specificity at other positions. This Erythrobacter litoralis (strain HTCC2594) protein is Peptide deformylase.